The following is a 30-amino-acid chain: Ampulexin 3 (30 aa).

The N-terminal stretch at 1–17 (MKAIMVLFYVMTLTIIG) is a signal peptide.

In terms of assembly, monomer. As to expression, expressed in venom sac and, to a lesser extent, in venom gland. Not expressed in brain.

It localises to the secreted. This is Ampulexin 3 from Ampulex compressa (Emerald cockroach wasp).